The chain runs to 269 residues: Phosphonoacetaldehyde hydrolase (269 aa).

The active-site Nucleophile is aspartate 10. Mg(2+)-binding residues include aspartate 10 and alanine 12. Lysine 52 functions as the Schiff-base intermediate with substrate in the catalytic mechanism. A Mg(2+)-binding site is contributed by aspartate 186.

Belongs to the HAD-like hydrolase superfamily. PhnX family. Homodimer. It depends on Mg(2+) as a cofactor.

The enzyme catalyses phosphonoacetaldehyde + H2O = acetaldehyde + phosphate + H(+). Its function is as follows. Involved in phosphonate degradation. This Salmonella typhimurium (strain LT2 / SGSC1412 / ATCC 700720) protein is Phosphonoacetaldehyde hydrolase (phnX).